The sequence spans 310 residues: CRAL-TRIO domain-containing protein YKL091C (310 aa).

A CRAL-TRIO domain is found at 101–274 (ERIKLAKMYP…KYGGTSVLHN (174 aa)).

This is CRAL-TRIO domain-containing protein YKL091C from Saccharomyces cerevisiae (strain ATCC 204508 / S288c) (Baker's yeast).